The chain runs to 475 residues: Glutamate--tRNA ligase (475 aa).

Residues 9–19 carry the 'HIGH' region motif; it reads PSPTGYLHVGG. The short motif at 240 to 244 is the 'KMSKS' region element; that stretch reads KLSKR. Residue lysine 243 participates in ATP binding.

Belongs to the class-I aminoacyl-tRNA synthetase family. Glutamate--tRNA ligase type 1 subfamily. In terms of assembly, monomer.

The protein resides in the cytoplasm. It carries out the reaction tRNA(Glu) + L-glutamate + ATP = L-glutamyl-tRNA(Glu) + AMP + diphosphate. Functionally, catalyzes the attachment of glutamate to tRNA(Glu) in a two-step reaction: glutamate is first activated by ATP to form Glu-AMP and then transferred to the acceptor end of tRNA(Glu). The chain is Glutamate--tRNA ligase from Vibrio campbellii (strain ATCC BAA-1116).